A 328-amino-acid polypeptide reads, in one-letter code: Stress response kinase A (328 aa).

Residue aspartate 201 is the Proton acceptor of the active site. Asparagine 206 and aspartate 217 together coordinate Mg(2+). Aspartate 217 is a catalytic residue.

This sequence belongs to the SrkA/RdoA protein kinase family. As to quaternary structure, monomer. Requires Mg(2+) as cofactor.

Its subcellular location is the cytoplasm. It catalyses the reaction L-seryl-[protein] + ATP = O-phospho-L-seryl-[protein] + ADP + H(+). It carries out the reaction L-threonyl-[protein] + ATP = O-phospho-L-threonyl-[protein] + ADP + H(+). Its function is as follows. A protein kinase that phosphorylates Ser and Thr residues. Probably acts to suppress the effects of stress linked to accumulation of reactive oxygen species. Probably involved in the extracytoplasmic stress response. This Salmonella choleraesuis (strain SC-B67) protein is Stress response kinase A.